The chain runs to 380 residues: Dynactin subunit 2 (380 aa).

The disordered stretch occupies residues Met-1–Asp-32. Acidic residues predominate over residues Glu-21–Asp-32. A phosphoserine mark is found at Ser-49, Ser-58, and Ser-86. Coiled-coil stretches lie at residues Val-100–Asp-135 and Glu-353–Ser-377.

It belongs to the dynactin subunit 2 family. Subunit of dynactin, a multiprotein complex associated with dynein.

It is found in the cytoplasm. The protein resides in the cytoskeleton. Its subcellular location is the membrane. Modulates cytoplasmic dynein binding to an organelle, and plays a role in prometaphase chromosome alignment and spindle organization during mitosis. May play a role in synapse formation during brain development. In Drosophila melanogaster (Fruit fly), this protein is Dynactin subunit 2.